The chain runs to 143 residues: uncharacterized protein (143 aa).

The protein belongs to the SufE family.

This is an uncharacterized protein from Mycobacterium tuberculosis (strain CDC 1551 / Oshkosh).